The following is a 185-amino-acid chain: Elongation factor P (185 aa).

Belongs to the elongation factor P family.

The protein localises to the cytoplasm. The protein operates within protein biosynthesis; polypeptide chain elongation. Functionally, involved in peptide bond synthesis. Stimulates efficient translation and peptide-bond synthesis on native or reconstituted 70S ribosomes in vitro. Probably functions indirectly by altering the affinity of the ribosome for aminoacyl-tRNA, thus increasing their reactivity as acceptors for peptidyl transferase. This is Elongation factor P from Nitratidesulfovibrio vulgaris (strain DP4) (Desulfovibrio vulgaris).